The sequence spans 218 residues: Large ribosomal subunit protein uL3 (218 aa).

It belongs to the universal ribosomal protein uL3 family. In terms of assembly, part of the 50S ribosomal subunit. Forms a cluster with proteins L14 and L19.

Its function is as follows. One of the primary rRNA binding proteins, it binds directly near the 3'-end of the 23S rRNA, where it nucleates assembly of the 50S subunit. This chain is Large ribosomal subunit protein uL3, found in Corynebacterium jeikeium (strain K411).